Consider the following 155-residue polypeptide: Short-chain-enoyl-CoA hydratase (155 aa).

This sequence belongs to the enoyl-CoA hydratase/isomerase family.

The catalysed reaction is a short-chain (3S)-3-hydroxyacyl-CoA = a short-chain (2E)-enoyl-CoA + H2O. The protein operates within lipid metabolism; butanoate metabolism. The chain is Short-chain-enoyl-CoA hydratase (crt) from Clostridioides difficile (Peptoclostridium difficile).